Reading from the N-terminus, the 618-residue chain is Chaperone protein HscA homolog (618 aa).

Belongs to the heat shock protein 70 family.

In terms of biological role, chaperone involved in the maturation of iron-sulfur cluster-containing proteins. Has a low intrinsic ATPase activity which is markedly stimulated by HscB. In Variovorax paradoxus (strain S110), this protein is Chaperone protein HscA homolog.